The following is a 357-amino-acid chain: MLLFAHLLQLLVSATVPTQSSPHSLRYFTTAVSRPGLGEPRFIIVGYVDDTQFVRFDSDAENPRMEPRARWIEQEGPEYWERETWKARDMGRNFRVNLRTLLGYYNQSNDESHTLQWMYGCDVGPDGRLLRGYCQEAYDGQDYISLNEDLRSWTANDIASQISKHKSEAVDEAHQQRAYLQGPCVEWLHRYLRLGNETLQRSDPPKAHVTHHPRSEDEVTLRCWALGFYPADITLTWQLNGEELTQDMELVETRPAGDGTFQKWAAVVVPLGKEQYYTCHVYHEGLPEPLTLRWEPPPSTVSNMVIIAVLVVLGAVIILGAVVAFVMKRRRHIGVKGCYAHVLGSKSFQTSDWPQKA.

A signal peptide spans 1-20 (MLLFAHLLQLLVSATVPTQS). The segment at 21–110 (SPHSLRYFTT…LLGYYNQSND (90 aa)) is alpha-1. The Extracellular portion of the chain corresponds to 21–304 (SPHSLRYFTT…EPPPSTVSNM (284 aa)). A glycan (N-linked (GlcNAc...) asparagine) is linked at N106. The alpha-2 stretch occupies residues 111–202 (ESHTLQWMYG…RLGNETLQRS (92 aa)). A disulfide bond links C121 and C184. N196 is a glycosylation site (N-linked (GlcNAc...) asparagine). An alpha-3 region spans residues 203–294 (DPPKAHVTHH…GLPEPLTLRW (92 aa)). In terms of domain architecture, Ig-like C1-type spans 205–293 (PKAHVTHHPR…EGLPEPLTLR (89 aa)). Cysteines 223 and 279 form a disulfide. Residues 295–304 (EPPPSTVSNM) form a connecting peptide region. Residues 305 to 327 (VIIAVLVVLGAVIILGAVVAFVM) form a helical membrane-spanning segment. At 328-357 (KRRRHIGVKGCYAHVLGSKSFQTSDWPQKA) the chain is on the cytoplasmic side. S347 carries the post-translational modification Phosphoserine.

Belongs to the MHC class I family. In terms of assembly, heterodimer of an alpha chain and a beta chain (beta-2-microglobulin).

It is found in the membrane. Involved in the presentation of foreign antigens to the immune system. This chain is H-2 class I histocompatibility antigen, D-37 alpha chain (H2-T23), found in Mus musculus (Mouse).